The primary structure comprises 341 residues: tRNA N6-adenosine threonylcarbamoyltransferase (341 aa).

Positions 111 and 115 each coordinate Fe cation. Residues 134-138, Asp-167, Gly-180, and Asn-272 contribute to the substrate site; that span reads LVSGG. Position 300 (Asp-300) interacts with Fe cation.

This sequence belongs to the KAE1 / TsaD family. The cofactor is Fe(2+).

Its subcellular location is the cytoplasm. It carries out the reaction L-threonylcarbamoyladenylate + adenosine(37) in tRNA = N(6)-L-threonylcarbamoyladenosine(37) in tRNA + AMP + H(+). Functionally, required for the formation of a threonylcarbamoyl group on adenosine at position 37 (t(6)A37) in tRNAs that read codons beginning with adenine. Is involved in the transfer of the threonylcarbamoyl moiety of threonylcarbamoyl-AMP (TC-AMP) to the N6 group of A37, together with TsaE and TsaB. TsaD likely plays a direct catalytic role in this reaction. The chain is tRNA N6-adenosine threonylcarbamoyltransferase from Blochmanniella pennsylvanica (strain BPEN).